The chain runs to 1079 residues: Isoleucine--tRNA ligase (1079 aa).

The short motif at 53–63 is the 'HIGH' region element; the sequence is PFANGLPHYGH. Positions 611 to 615 match the 'KMSKS' region motif; the sequence is KLSKR. Lys614 contacts ATP.

It belongs to the class-I aminoacyl-tRNA synthetase family. IleS type 2 subfamily. As to quaternary structure, monomer. The cofactor is Zn(2+).

It localises to the cytoplasm. The catalysed reaction is tRNA(Ile) + L-isoleucine + ATP = L-isoleucyl-tRNA(Ile) + AMP + diphosphate. Functionally, catalyzes the attachment of isoleucine to tRNA(Ile). As IleRS can inadvertently accommodate and process structurally similar amino acids such as valine, to avoid such errors it has two additional distinct tRNA(Ile)-dependent editing activities. One activity is designated as 'pretransfer' editing and involves the hydrolysis of activated Val-AMP. The other activity is designated 'posttransfer' editing and involves deacylation of mischarged Val-tRNA(Ile). This chain is Isoleucine--tRNA ligase, found in Rickettsia canadensis (strain McKiel).